A 207-amino-acid chain; its full sequence is N-(5'-phosphoribosyl)anthranilate isomerase (207 aa).

Belongs to the TrpF family.

It catalyses the reaction N-(5-phospho-beta-D-ribosyl)anthranilate = 1-(2-carboxyphenylamino)-1-deoxy-D-ribulose 5-phosphate. It participates in amino-acid biosynthesis; L-tryptophan biosynthesis; L-tryptophan from chorismate: step 3/5. This chain is N-(5'-phosphoribosyl)anthranilate isomerase, found in Petrotoga mobilis (strain DSM 10674 / SJ95).